The following is a 156-amino-acid chain: V-type sodium ATPase subunit K (156 aa).

4 helical membrane passes run glycine 11 to alanine 31, leucine 60 to leucine 80, glycine 89 to alanine 109, and isoleucine 132 to leucine 152.

The protein belongs to the V-ATPase proteolipid subunit family. Post-translationally, the N-terminus is blocked.

It localises to the cell membrane. Functionally, involved in ATP-driven sodium extrusion. The sequence is that of V-type sodium ATPase subunit K (ntpK) from Enterococcus hirae (strain ATCC 9790 / DSM 20160 / JCM 8729 / LMG 6399 / NBRC 3181 / NCIMB 6459 / NCDO 1258 / NCTC 12367 / WDCM 00089 / R).